The sequence spans 337 residues: D-lactate dehydrogenase (337 aa).

Residues 156–157 (HI), Asp-176, 207–208 (VP), Asn-213, 234–236 (CSR), and Asp-260 contribute to the NAD(+) site. The active site involves Arg-236. The active site involves Glu-265. The active-site Proton donor is His-297.

Belongs to the D-isomer specific 2-hydroxyacid dehydrogenase family. As to quaternary structure, homodimer.

It carries out the reaction (R)-lactate + NAD(+) = pyruvate + NADH + H(+). The sequence is that of D-lactate dehydrogenase from Lactobacillus helveticus (Lactobacillus suntoryeus).